We begin with the raw amino-acid sequence, 247 residues long: Large ribosomal subunit protein uL30 (247 aa).

N-acetylmethionine is present on Met1. 4 consecutive repeat copies span residues Lys7–Leu17, Lys18–Ile29, Lys30–Leu41, and Arg42–Ala53. The tract at residues Lys7–Ala53 is 4 X 12 AA tandem repeats. Thr16 carries the post-translational modification Phosphothreonine. Lys123 bears the N6-acetyllysine mark. Lys126 carries the N6-succinyllysine modification. Tyr138 carries the post-translational modification Phosphotyrosine.

This sequence belongs to the universal ribosomal protein uL30 family. In terms of assembly, component of the large ribosomal subunit. Homodimer. Interacts with DHX33.

The protein resides in the cytoplasm. Its function is as follows. Component of the large ribosomal subunit. The ribosome is a large ribonucleoprotein complex responsible for the synthesis of proteins in the cell. Binds to G-rich structures in 28S rRNA and in mRNAs. Plays a regulatory role in the translation apparatus; inhibits cell-free translation of mRNAs. The polypeptide is Large ribosomal subunit protein uL30 (RPL7) (Pongo abelii (Sumatran orangutan)).